A 270-amino-acid polypeptide reads, in one-letter code: NAD kinase (270 aa).

Residue Asp61 is the Proton acceptor of the active site. NAD(+) contacts are provided by residues 61 to 62, 133 to 134, Arg144, Arg163, Asp165, and 176 to 181; these read DG, NE, and TAYNLS.

This sequence belongs to the NAD kinase family. A divalent metal cation is required as a cofactor.

Its subcellular location is the cytoplasm. The catalysed reaction is NAD(+) + ATP = ADP + NADP(+) + H(+). Functionally, involved in the regulation of the intracellular balance of NAD and NADP, and is a key enzyme in the biosynthesis of NADP. Catalyzes specifically the phosphorylation on 2'-hydroxyl of the adenosine moiety of NAD to yield NADP. In Natronomonas pharaonis (strain ATCC 35678 / DSM 2160 / CIP 103997 / JCM 8858 / NBRC 14720 / NCIMB 2260 / Gabara) (Halobacterium pharaonis), this protein is NAD kinase.